The following is a 313-amino-acid chain: Ribosomal RNA small subunit methyltransferase H (313 aa).

Residues 37-39 (GGH), Asp-57, Phe-82, Asp-104, and Gln-111 each bind S-adenosyl-L-methionine.

Belongs to the methyltransferase superfamily. RsmH family.

The protein localises to the cytoplasm. It catalyses the reaction cytidine(1402) in 16S rRNA + S-adenosyl-L-methionine = N(4)-methylcytidine(1402) in 16S rRNA + S-adenosyl-L-homocysteine + H(+). In terms of biological role, specifically methylates the N4 position of cytidine in position 1402 (C1402) of 16S rRNA. The polypeptide is Ribosomal RNA small subunit methyltransferase H (Alteromonas mediterranea (strain DSM 17117 / CIP 110805 / LMG 28347 / Deep ecotype)).